Here is a 155-residue protein sequence, read N- to C-terminus: MVRRFKRAVKYRRGSRTHGWGRVGQHRKSGGSGGKGMVGFHKHKWSLVMKYGESGTGWPFYGKHGFKQPPTITVEWRPINVGTLAEVVRELKSEGKIREEGGKYVVNLLELGYNKLLGGGSIDVPVIVYTPVASKTAVEKIQRAGGEVRVVAIHR.

Residues 1 to 16 (MVRRFKRAVKYRRGSR) are compositionally biased toward basic residues. The interval 1–35 (MVRRFKRAVKYRRGSRTHGWGRVGQHRKSGGSGGK) is disordered.

Belongs to the universal ribosomal protein uL15 family. In terms of assembly, part of the 50S ribosomal subunit.

In terms of biological role, binds to the 23S rRNA. The chain is Large ribosomal subunit protein uL15 from Pyrobaculum arsenaticum (strain DSM 13514 / JCM 11321 / PZ6).